The primary structure comprises 547 residues: Methionine--tRNA ligase (547 aa).

A 'HIGH' region motif is present at residues 15-25 (PYANGSLHLGH). 4 residues coordinate Zn(2+): Cys146, Cys149, Cys159, and Cys162. The short motif at 332 to 336 (KMSKS) is the 'KMSKS' region element. Residue Lys335 participates in ATP binding.

It belongs to the class-I aminoacyl-tRNA synthetase family. MetG type 1 subfamily. In terms of assembly, monomer. The cofactor is Zn(2+).

It localises to the cytoplasm. The catalysed reaction is tRNA(Met) + L-methionine + ATP = L-methionyl-tRNA(Met) + AMP + diphosphate. Functionally, is required not only for elongation of protein synthesis but also for the initiation of all mRNA translation through initiator tRNA(fMet) aminoacylation. The protein is Methionine--tRNA ligase of Baumannia cicadellinicola subsp. Homalodisca coagulata.